Here is a 1125-residue protein sequence, read N- to C-terminus: ATP-dependent DNA helicase Hel308 (1125 aa).

Residues 1-29 carry the Q motif motif; sequence MKVDELPIDERIKRVIKERGIEELYPPQA. ATP is bound by residues glutamine 28 and 46-53; that span reads IPTASGKT. The region spanning 33–197 is the Helicase ATP-binding domain; sequence KSGVLEGKNL…WLDASLVVSD (165 aa). Positions 145–148 match the DEAH box motif; sequence DEVH. The 215-residue stretch at 226–440 folds into the Helicase C-terminal domain; sequence NWESLVLDAV…ELKERLESET (215 aa). One can recognise a DOD-type homing endonuclease domain in the interval 500 to 640; it reads LIGLWIAEGS…LQLLVASLGY (141 aa).

It belongs to the helicase family. Hel308 subfamily. Monomer. In terms of processing, this protein undergoes a protein self splicing that involves a post-translational excision of the intervening region (intein) followed by peptide ligation.

It catalyses the reaction Couples ATP hydrolysis with the unwinding of duplex DNA by translocating in the 3'-5' direction.. The catalysed reaction is ATP + H2O = ADP + phosphate + H(+). DNA-dependent ATPase and 3'-5' DNA helicase that may be involved in repair of stalled replication forks. This Thermococcus kodakarensis (strain ATCC BAA-918 / JCM 12380 / KOD1) (Pyrococcus kodakaraensis (strain KOD1)) protein is ATP-dependent DNA helicase Hel308.